A 296-amino-acid polypeptide reads, in one-letter code: L-ornithine N(alpha)-acyltransferase (296 aa).

The protein belongs to the acetyltransferase family. OlsB subfamily.

The catalysed reaction is a (3R)-hydroxyacyl-[ACP] + L-ornithine = a lyso-ornithine lipid + holo-[ACP] + H(+). It functions in the pathway lipid metabolism. Functionally, catalyzes the first step in the biosynthesis of ornithine lipids, which are phosphorus-free membrane lipids. Catalyzes the 3-hydroxyacyl-acyl carrier protein-dependent acylation of ornithine to form lyso-ornithine lipid (LOL). The protein is L-ornithine N(alpha)-acyltransferase of Rhizobium meliloti (strain 1021) (Ensifer meliloti).